Consider the following 336-residue polypeptide: Putative cysteine synthase (336 aa).

Position 41 is an N6-(pyridoxal phosphate)lysine (lysine 41). Residues asparagine 71, 179-183 (GTGGS), and serine 269 each bind pyridoxal 5'-phosphate.

Belongs to the cysteine synthase/cystathionine beta-synthase family. Pyridoxal 5'-phosphate serves as cofactor.

It carries out the reaction O-acetyl-L-serine + hydrogen sulfide = L-cysteine + acetate. As it is highly similar to bacterial and plant cysteine synthases, it is possible that it catalyzes a related reaction. The polypeptide is Putative cysteine synthase (Sinorhizobium fredii (strain NBRC 101917 / NGR234)).